A 368-amino-acid polypeptide reads, in one-letter code: HECT-type ubiquitin ligase-interacting protein apyA (368 aa).

Belongs to the arrestin family. In terms of assembly, interacts with hulA.

May be involved in signaling by recognizing appropriately phosphorylated substrates via its arrestin domains and then recruit a HECT-type ubiquitin ligase such as hulA, leading to ubiquitination of the substrate, providing a link between ubiquitination and phosphorylation in protein regulation and stability. The protein is HECT-type ubiquitin ligase-interacting protein apyA (apyA) of Emericella nidulans (strain FGSC A4 / ATCC 38163 / CBS 112.46 / NRRL 194 / M139) (Aspergillus nidulans).